A 334-amino-acid polypeptide reads, in one-letter code: D-fructose 1,6-bisphosphatase class 2/sedoheptulose 1,7-bisphosphatase (334 aa).

Mn(2+) is bound by residues aspartate 33, glutamate 57, aspartate 85, and glutamate 88. Residues 88–90, tyrosine 119, 164–166, and 186–188 each bind substrate; these read EGT, RAR, and DGD. Glutamate 213 contacts Mn(2+).

It belongs to the FBPase class 2 family. As to quaternary structure, homotetramer. Requires Mn(2+) as cofactor.

It carries out the reaction beta-D-fructose 1,6-bisphosphate + H2O = beta-D-fructose 6-phosphate + phosphate. The enzyme catalyses D-sedoheptulose 1,7-bisphosphate + H2O = D-sedoheptulose 7-phosphate + phosphate. Its pathway is carbohydrate biosynthesis; Calvin cycle. Its function is as follows. Catalyzes the hydrolysis of fructose 1,6-bisphosphate (Fru 1,6-P2) and sedoheptulose 1,7-bisphosphate (Sed 1,7-P2) to fructose 6-phosphate and sedoheptulose 7-phosphate, respectively. The polypeptide is D-fructose 1,6-bisphosphatase class 2/sedoheptulose 1,7-bisphosphatase (Synechococcus sp. (strain CC9902)).